Here is a 409-residue protein sequence, read N- to C-terminus: Protein naked cuticle homolog 2-like (409 aa).

Gly2 carries N-myristoyl glycine lipidation. The 36-residue stretch at 109–144 folds into the EF-hand domain; the sequence is AEDNRQEWVFTLYDFDNSGKVTKEDMSSLMHTIYDV. Ca(2+) is bound by residues Asp122, Asp124, Ser126, Lys128, and Asp133. 4 disordered regions span residues 166 to 224, 243 to 315, 346 to 367, and 388 to 409; these read VTPE…YCVD, TSRF…RFPG, NHTH…IRSR, and RHEH…YHQT. Basic and acidic residues-rich tracts occupy residues 171–185 and 193–224; these read AARR…RETS and VRSE…YCVD. Low complexity predominate over residues 247–268; sequence DSSSPDADQDPPSRSSHSQSRP. Residues 389-409 show a composition bias toward basic residues; it reads HEHHHHHEHHHHHHYHHYHQT.

This sequence belongs to the NKD family.

It is found in the cell membrane. The protein localises to the cytoplasm. Cell autonomous antagonist of both the canonical and non-canonical Wnt signaling pathways. In Danio rerio (Zebrafish), this protein is Protein naked cuticle homolog 2-like (nkd2l).